Here is a 319-residue protein sequence, read N- to C-terminus: Ankyrin repeat domain-containing protein 1 (319 aa).

Positions 46-65 are disordered; sequence KTLPANSVKQGEEQRKSEKL. The stretch at 53–89 forms a coiled coil; sequence VKQGEEQRKSEKLREAELKKKKLEQRSKLENLEDLEI. Residues 55–65 are compositionally biased toward basic and acidic residues; that stretch reads QGEEQRKSEKL. ANK repeat units follow at residues 152–181, 185–214, 218–247, 251–280, and 284–315; these read YKRT…QIEF, LEST…KISA, LLST…DLNA, EGDT…DLKV, and AGKT…KNSR.

In terms of assembly, interacts with TTN/titin and YBX1. Expressed in heart, cardiac muscle.

It is found in the nucleus. Its function is as follows. May play an important role in endothelial cell activation. May act as a nuclear transcription factor that negatively regulates the expression of cardiac genes. In Mus musculus (Mouse), this protein is Ankyrin repeat domain-containing protein 1 (Ankrd1).